A 332-amino-acid chain; its full sequence is Polygalacturonase inhibitor 1 (332 aa).

The first 24 residues, 1–24, serve as a signal peptide directing secretion; sequence MASTASFMLAVLLAVAVAAAPARA. 2 disulfide bridges follow: C27–C58 and C59–C66. LRR repeat units lie at residues 72–96, 97–118, 119–142, 143–166, 167–192, 193–215, 216–236, 237–259, 260–283, and 284–310; these read VNNV…GLTA, LMSL…CLTA, LSNL…SLAR, IRSL…SFSD, LPNL…VQGQ, FRSL…AQDE, INTV…LFAA, GRPI…KLVF, PPEL…SLAA, and LSTL…VIRH. N-linked (GlcNAc...) asparagine glycosylation is present at N131. 3 disulfide bridges follow: C298–C312, C298–C320, and C320–C329.

This sequence belongs to the polygalacturonase-inhibiting protein family. As to expression, highly expressed in calli, immature and mature panicles, and in three inner floral organs: lodicules, stamens and carpels. Expressed at low level in seedling roots and mature stems.

It localises to the secreted. Its subcellular location is the cell wall. In terms of biological role, inhibitor of fungal polygalacturonase. Regulates floral organ number. This Oryza sativa subsp. japonica (Rice) protein is Polygalacturonase inhibitor 1.